We begin with the raw amino-acid sequence, 890 residues long: MSKALLHLHFLSLFLLCCVCHSSIFTLNFHFTGIVACRPHQIQAFTKFTNEFDTRGCNNSDTFNGVWCDNSTGAVAVLQLRKCLSGTLKSNSSLFGFHQLRYVDLQNNNLTSSSLPSGFGNLKRLEGLFLSSNGFLGQVPSSFSNLTMLAQLDLSYNKLTGSFPLVRGLRKLIVLDLSYNHFSGTLNPNSSLFELHQLRYLNLAFNNFSSSLPSKFGNLHRLENLILSSNGFSGQVPSTISNLTRLTKLYLDQNKLTSSFPLVQNLTNLYELDLSYNKFFGVIPSSLLTLPFLAHLALRENNLAGSVEVSNSSTSSRLEIMYLGSNHFEGQILEPISKLINLKHLDLSFLNTSYPIDLKLFSSLKSLRSLDLSGNSISSASLSSDSYIPLTLEMLTLRHCDINEFPNILKTLKELVYIDISNNRMKGKIPEWLWSLPLLQSVTLGNNYFTGFQGSAEILVNSSVLLLYLDSNNFEGALPDLPLSIKGFGVASNSFTSEIPLSICNRSSLAAIDLSYNNFTGPIPPCLRNLELVYLRNNNLEGSIPDALCDGASLRTLDVSHNRLTGKLPRSFVNCSSLKFLSVINNRIEDTFPFWLKALPNLQVLTLRSNRFYGPISPPHQGPLGFPELRIFEISDNKFTGSLPPNYFVNWKASSRTMNQDGGLYMVYEEKLFDEGGYGYTDALDLQYKGLHMEQAKALTSYAAIDFSGNRLEGQIPESIGLLKALIAVNISNNAFTGHIPLSMANLENLESLDMSRNQLSGTIPNGLGSISFLAYINVSHNQLTGEIPQGTQITGQSKSSFEGNAGLCGLPLKESCFGTGAPPMYHQKQEDKEEEEEEEEEEEEVLNGRAVAIGYGSGLLLGLAIAQVIASYKPEWLVKIIGLNKRRKR.

A signal peptide spans 1–22; the sequence is MSKALLHLHFLSLFLLCCVCHS. Residues 23–850 lie on the Extracellular side of the membrane; the sequence is SIFTLNFHFT…EEEEEVLNGR (828 aa). N-linked (GlcNAc...) asparagine glycans are attached at residues N58, N70, N91, N109, and N145. 27 LRR repeats span residues 97–121, 123–145, 146–171, 173–195, 196–218, 220–243, 244–268, 270–290, 291–316, 318–339, 340–363, 364–389, 391–411, 412–436, 438–461, 462–485, 487–506, 507–527, 528–551, 553–575, 577–598, 599–623, 626–650, 699–724, 726–747, 748–771, and 773–796; these read FHQL…GFGN, KRLE…SFSN, LTML…GLRK, IVLD…LFEL, HQLR…KFGN, HRLE…ISNL, TRLT…NLTN, YELD…LLTL, PFLA…STSS, LEIM…ISKL, INLK…LFSS, LKSL…SYIP, TLEM…ILKT, LKEL…LWSL, LLQS…ILVN, SSVL…PLSI, GFGV…ICNR, SSLA…PPCL, RNLE…LCDG, SLRT…FVNC, SLKF…WLKA, LPNL…HQGP, FPEL…YFVN, LTSY…GLLK, LIAV…MANL, ENLE…LGSI, and FLAY…QITG. 4 N-linked (GlcNAc...) asparagine glycosylation sites follow: N189, N207, N242, and N265. A glycan (N-linked (GlcNAc...) asparagine) is linked at N311. Residue N351 is glycosylated (N-linked (GlcNAc...) asparagine). N461 carries N-linked (GlcNAc...) asparagine glycosylation. 2 N-linked (GlcNAc...) asparagine glycosylation sites follow: N505 and N518. An N-linked (GlcNAc...) asparagine glycan is attached at N574. N730 carries an N-linked (GlcNAc...) asparagine glycan. Residue N778 is glycosylated (N-linked (GlcNAc...) asparagine). The chain crosses the membrane as a helical span at residues 851–871; sequence AVAIGYGSGLLLGLAIAQVIA. Residues 872-890 lie on the Cytoplasmic side of the membrane; that stretch reads SYKPEWLVKIIGLNKRRKR.

It belongs to the RLP family. Directly interacts with a 20-mer fragment (nlp20) from NLPs through its extracellular LRR domain. Component of a trimeric complex composed of RLP23, SOBIR1 and BAK1. BAK1 is recruited into a pre-formed RLP23-SOBIR1 complex in a ligand-dependent manner. Interacts with SOBIR1.

The protein localises to the cell membrane. Involved in the perception of necrosis and ethylene-inducing peptide 1-like proteins (NLPs), that act as extracellular signals mediating immune activation. Component of the RLP23-SOBIR1-BAK1 complex that mediates NLP-triggered immunity. This is Receptor like protein 23 from Arabidopsis thaliana (Mouse-ear cress).